The primary structure comprises 901 residues: MAAQNEQRPERIKTTPYLEGDVLSSDSGPLLSVFALQEIMQKVRQVQADYMTATREVDFTVPDVQKILDDIKALTVEQVYKIVKVPSISFRHIVMQSRDRVLRVDTYYEEMSQVGDVITEDEPEKFYSTIIKKVRFIRGKGSFILHDIPTRDHRGMEAAEPEVLGVEFKNVPPVLTAEHRAMIQSALDGSIIENGNVATRDVDVFIGACSEPIYRIYNRLQGYIEAVQLQELRNSIGWLERLGQRKRITYSQEVLTDFRRQDTIWVLALQLPVNPQVVWDVPRSSIANLIMNIATCLPTGEYIAPNPRISSITLTQRITTTGPFAILTGSTPTAQQLNDVRKIYLALMFPGQIILDLKIDPGERMDPAVRMVAGVVGHLLFTAGGRFTNLTQNMARQLDIALNDYLLYMYNTRVQVNYGPTGEPLDFQIGRNQYDCNVFRADFATGTGYNGWATIDVEYRDPAPYVHAQRYIRYCGIDSRELINPTTYGIGMTYHCYNEMLRMLVAAGKDSEAAYFRSMLPFHMVRFARINQIINEDLHSVFSLPDDMFNALLPDLVAGAHQNADPVVLDVSWISLWFAFNRSFEPTHRNEMLEIAPLIESVYASELSVMKVDIRHLSLMQRRFPDVLIQARPSHFWKAVLNDSPEAVKAVMNLSHSHNFINIRDMMRWVLLPSLQPSLKLALEEEAWAAANDFEDLMLTDQVYMHRDMLPEPRLDDIERFRQEGFYYTNMLEAPPEIDRVVQYTYEIARLQADMGQFRAALRRIMDDDDWVRSDGVLRTVRVKFFDARPPDDILQGLPFSYDTNEKGGLSYATIKYATETTIFYLIYNVEFSNTPDSLVLINPTYTMTKVFINKRIVERVRVGQILAVLNRRFVAYKGKMRIMDITQSLKMGTKLAAPTV.

It belongs to the orbivirus VP3 family.

It is found in the virion. In terms of biological role, the VP3 protein is one of the five proteins (with VP1, VP4, VP6 and VP7) which form the inner capsid of the virus. This chain is Core protein VP3 (Segment-3), found in Antilocapra americana (Pronghorn).